Consider the following 197-residue polypeptide: Small ribosomal subunit protein uS4 (197 aa).

In terms of domain architecture, S4 RNA-binding spans 87-147; the sequence is SRIDNVIFRL…ESKKNTQRMK (61 aa).

This sequence belongs to the universal ribosomal protein uS4 family. In terms of assembly, part of the 30S ribosomal subunit. Contacts protein S5. The interaction surface between S4 and S5 is involved in control of translational fidelity.

In terms of biological role, one of the primary rRNA binding proteins, it binds directly to 16S rRNA where it nucleates assembly of the body of the 30S subunit. Functionally, with S5 and S12 plays an important role in translational accuracy. This is Small ribosomal subunit protein uS4 from Agathobacter rectalis (strain ATCC 33656 / DSM 3377 / JCM 17463 / KCTC 5835 / VPI 0990) (Eubacterium rectale).